The chain runs to 242 residues: Segregation and condensation protein A (242 aa).

It belongs to the ScpA family. As to quaternary structure, component of a cohesin-like complex composed of ScpA, ScpB and the Smc homodimer, in which ScpA and ScpB bind to the head domain of Smc. The presence of the three proteins is required for the association of the complex with DNA.

The protein localises to the cytoplasm. In terms of biological role, participates in chromosomal partition during cell division. May act via the formation of a condensin-like complex containing Smc and ScpB that pull DNA away from mid-cell into both cell halves. The polypeptide is Segregation and condensation protein A (Lactococcus lactis subsp. lactis (strain IL1403) (Streptococcus lactis)).